Reading from the N-terminus, the 1183-residue chain is DNA-directed RNA polymerase subunit beta (1183 aa).

Residues Glu1151 to Ala1162 show a composition bias toward acidic residues. Positions Glu1151 to Asp1183 are disordered.

It belongs to the RNA polymerase beta chain family. As to quaternary structure, the RNAP catalytic core consists of 2 alpha, 1 beta, 1 beta' and 1 omega subunit. When a sigma factor is associated with the core the holoenzyme is formed, which can initiate transcription.

It carries out the reaction RNA(n) + a ribonucleoside 5'-triphosphate = RNA(n+1) + diphosphate. Functionally, DNA-dependent RNA polymerase catalyzes the transcription of DNA into RNA using the four ribonucleoside triphosphates as substrates. The polypeptide is DNA-directed RNA polymerase subunit beta (Staphylococcus epidermidis (strain ATCC 12228 / FDA PCI 1200)).